Reading from the N-terminus, the 96-residue chain is uncharacterized protein (96 aa).

The first 19 residues, 1–19 (MKQIIPALITLSFSPMAIA), serve as a signal peptide directing secretion.

This is an uncharacterized protein from Synechocystis sp. (strain ATCC 27184 / PCC 6803 / Kazusa).